We begin with the raw amino-acid sequence, 507 residues long: Beta-glucosidase 12 (507 aa).

Residues 1-22 form the signal peptide; it reads MRTIYLSLLVFIIVLALNEVMA. Gln50 contacts a beta-D-glucoside. Asn81 carries an N-linked (GlcNAc...) asparagine glycan. Residues His154 and 199-200 each bind a beta-D-glucoside; that span reads NE. The Proton donor role is filled by Glu200. Cys219 and Cys227 are oxidised to a cystine. Asn226 carries an N-linked (GlcNAc...) asparagine glycan. An a beta-D-glucoside-binding site is contributed by Tyr344. Asn358 carries N-linked (GlcNAc...) asparagine glycosylation. A beta-D-glucoside contacts are provided by residues Glu414, Trp459, 466–467, and Phe475; that span reads EW. Glu414 (nucleophile) is an active-site residue.

The protein belongs to the glycosyl hydrolase 1 family.

The enzyme catalyses Hydrolysis of terminal, non-reducing beta-D-glucosyl residues with release of beta-D-glucose.. In Arabidopsis thaliana (Mouse-ear cress), this protein is Beta-glucosidase 12.